A 482-amino-acid polypeptide reads, in one-letter code: MSFKGFTKAVSRAPQSFRQKFKMGEQTEDPVYEDAERRFQELEQETKKLSEESKRYSTAVNGMLTHQIGFAKSMEEIFKPISGKMSDPNATIPEDNPQGIEASEQYRAIVAELQETLKPDLALVEEKIVTPCQELLKIITYIRKMATKRNHKKLDLDRHLNTYNKHEKKKEPTAKDEERLYKAQAQVEVAQQEYDYYNDLLKTQLPILFSLEAEFVKPLFVSFYFMQLNIFYTLYNRLQDMKIPYFDLNSDIVESYIAKKGNVEEQTDALTITHFKLGYSKAKLEMTRRKYGVATAEGSPVSGASSGVGYGAGYDPATATSPTPTGYGYGAAAPSYAAQPAAQYGTAAAVGTAAAVGTAAGAAAGAVPGTYPQYAAAQSPPLTGLGFQQSPQQQQGPPPAYSNPLTSPVAGTPAAAVAAAPGVETVTALYDYQAQAAGDLSFPAGAVIEIVQRTPDVNEWWTGRYNGQQGVFPGNYVQLNKN.

N-acetylserine is present on serine 2. Positions 17-254 constitute a BAR domain; sequence FRQKFKMGEQ…YFDLNSDIVE (238 aa). Coiled-coil stretches lie at residues 31–64 and 174–204; these read VYED…NGML and AKDE…LKTQ. Residue lysine 242 forms a Glycyl lysine isopeptide (Lys-Gly) (interchain with G-Cter in ubiquitin) linkage. Phosphoserine; by FUS3 and PHO85 is present on residues serine 299, serine 321, and serine 379. The interval 382-407 is disordered; sequence LTGLGFQQSPQQQQGPPPAYSNPLTS. The SH3 domain occupies 421–482; it reads PGVETVTALY…PGNYVQLNKN (62 aa). Lysine 481 participates in a covalent cross-link: Glycyl lysine isopeptide (Lys-Gly) (interchain with G-Cter in ubiquitin).

As to quaternary structure, binds to actin. Interacts with ABP1, GYL1, GYP5, PCL2 and YBR108W. In terms of processing, phosphorylated redundantly by cyclin-dependent kinase PHO85 in association with PCL1,2-type cyclins or by MAP kinase FUS3. Phosphorylation inhibits interaction with complexes involved in actin cytoskeleton function.

The protein resides in the cytoplasm. It is found in the cytoskeleton. Its function is as follows. Component of a cytoskeletal structure that is required for the formation of endocytic vesicles at the plasma membrane level. Could be implicated in cytoskeletal reorganization in response to environmental stresses and could act in the budding site selection mechanism. The polypeptide is Reduced viability upon starvation protein 167 (RVS167) (Saccharomyces cerevisiae (strain ATCC 204508 / S288c) (Baker's yeast)).